The sequence spans 526 residues: Protein ERGIC-53-like (526 aa).

The first 25 residues, Met1–Thr25, serve as a signal peptide directing secretion. Over Gly26–Gln462 the chain is Lumenal. The L-type lectin-like domain occupies Arg31–Leu252. N-linked (GlcNAc...) asparagine glycosylation is present at Asn75. Residues Cys176 and Cys215 are joined by a disulfide bond. A helical transmembrane segment spans residues Pro463–Phe483. The Cytoplasmic segment spans residues Arg484–Ala526.

As to expression, highly expressed in normal and neoplastic prostate. Also expressed in cardiac atrium, salivary gland, spleen and selective cells in the CNS.

Its subcellular location is the endoplasmic reticulum-Golgi intermediate compartment membrane. The chain is Protein ERGIC-53-like (LMAN1L) from Homo sapiens (Human).